We begin with the raw amino-acid sequence, 286 residues long: Pantothenate synthetase (286 aa).

Met-30–His-37 lines the ATP pocket. His-37 functions as the Proton donor in the catalytic mechanism. Position 61 (Gln-61) interacts with (R)-pantoate. Gln-61 contributes to the beta-alanine binding site. Gly-147–Asp-150 lines the ATP pocket. Gln-153 contacts (R)-pantoate. ATP contacts are provided by residues Val-176 and Lys-184 to Arg-187.

It belongs to the pantothenate synthetase family. In terms of assembly, homodimer.

It is found in the cytoplasm. It catalyses the reaction (R)-pantoate + beta-alanine + ATP = (R)-pantothenate + AMP + diphosphate + H(+). The protein operates within cofactor biosynthesis; (R)-pantothenate biosynthesis; (R)-pantothenate from (R)-pantoate and beta-alanine: step 1/1. Functionally, catalyzes the condensation of pantoate with beta-alanine in an ATP-dependent reaction via a pantoyl-adenylate intermediate. The sequence is that of Pantothenate synthetase from Bacillus velezensis (strain DSM 23117 / BGSC 10A6 / LMG 26770 / FZB42) (Bacillus amyloliquefaciens subsp. plantarum).